Consider the following 221-residue polypeptide: 7-cyano-7-deazaguanine synthase (221 aa).

8-18 (MSGGMDSTLCA) contacts ATP. Zn(2+) contacts are provided by C187, C195, C198, and C201.

It belongs to the QueC family. Zn(2+) is required as a cofactor.

The enzyme catalyses 7-carboxy-7-deazaguanine + NH4(+) + ATP = 7-cyano-7-deazaguanine + ADP + phosphate + H2O + H(+). It functions in the pathway purine metabolism; 7-cyano-7-deazaguanine biosynthesis. Catalyzes the ATP-dependent conversion of 7-carboxy-7-deazaguanine (CDG) to 7-cyano-7-deazaguanine (preQ(0)). In Campylobacter concisus (strain 13826), this protein is 7-cyano-7-deazaguanine synthase.